The following is a 394-amino-acid chain: Chorismate synthase (394 aa).

NADP(+)-binding residues include Arg-42 and Arg-48. Residues 137 to 139 (RAS), 258 to 259 (QA), Gly-302, 317 to 321 (KPIAT), and Arg-343 contribute to the FMN site.

The protein belongs to the chorismate synthase family. As to quaternary structure, homotetramer. Requires FMNH2 as cofactor.

It catalyses the reaction 5-O-(1-carboxyvinyl)-3-phosphoshikimate = chorismate + phosphate. It functions in the pathway metabolic intermediate biosynthesis; chorismate biosynthesis; chorismate from D-erythrose 4-phosphate and phosphoenolpyruvate: step 7/7. Its function is as follows. Catalyzes the anti-1,4-elimination of the C-3 phosphate and the C-6 proR hydrogen from 5-enolpyruvylshikimate-3-phosphate (EPSP) to yield chorismate, which is the branch point compound that serves as the starting substrate for the three terminal pathways of aromatic amino acid biosynthesis. This reaction introduces a second double bond into the aromatic ring system. This is Chorismate synthase from Streptomyces avermitilis (strain ATCC 31267 / DSM 46492 / JCM 5070 / NBRC 14893 / NCIMB 12804 / NRRL 8165 / MA-4680).